The primary structure comprises 251 residues: tRNA-cytidine(32) 2-sulfurtransferase 2 (251 aa).

The PP-loop motif motif lies at 33–38 (SGGKDS). Positions 108, 111, and 199 each coordinate [4Fe-4S] cluster.

This sequence belongs to the TtcA family. In terms of assembly, homodimer. It depends on Mg(2+) as a cofactor. Requires [4Fe-4S] cluster as cofactor.

Its subcellular location is the cytoplasm. It catalyses the reaction cytidine(32) in tRNA + S-sulfanyl-L-cysteinyl-[cysteine desulfurase] + AH2 + ATP = 2-thiocytidine(32) in tRNA + L-cysteinyl-[cysteine desulfurase] + A + AMP + diphosphate + H(+). It participates in tRNA modification. In terms of biological role, catalyzes the ATP-dependent 2-thiolation of cytidine in position 32 of tRNA, to form 2-thiocytidine (s(2)C32). The sulfur atoms are provided by the cysteine/cysteine desulfurase (IscS) system. This chain is tRNA-cytidine(32) 2-sulfurtransferase 2, found in Francisella tularensis subsp. tularensis (strain WY96-3418).